A 243-amino-acid polypeptide reads, in one-letter code: RNA-binding protein with serine-rich domain 1 homolog (243 aa).

The segment at 48-92 (SSTRQFNNTRSPSGRSASRSSNFSHRSSSRDSFSSNRSYSSSLSR) is disordered. Residues 57–92 (RSPSGRSASRSSNFSHRSSSRDSFSSNRSYSSSLSR) are compositionally biased toward low complexity. Positions 99-177 (RTILVENLTR…EELFVSIKRF (79 aa)) constitute an RRM domain. Residues 189–243 (YENSYRPSRSQNNSHYNDKSFHRSRYSRARSRSPGSNISEYSDQSPPYHSYRHRP) are disordered. Residues 193 to 203 (YRPSRSQNNSH) show a composition bias toward polar residues. A compositionally biased stretch (basic residues) spans 210–219 (HRSRYSRARS). The span at 222–235 (PGSNISEYSDQSPP) shows a compositional bias: polar residues.

It belongs to the splicing factor SR family. As to quaternary structure, component of the active spliceosome.

The protein resides in the cytoplasm. Its subcellular location is the nucleus. Putative component of the spliceosome which enhances the formation of the ATP-dependent A complex of the spliceosome. may participate in mRNA 3'-end cleavage. Also mediates increase of mRNA abundance and translational efficiency. This Schizosaccharomyces pombe (strain 972 / ATCC 24843) (Fission yeast) protein is RNA-binding protein with serine-rich domain 1 homolog.